The following is a 410-amino-acid chain: Neurotensin receptor type 2 (410 aa).

Residues Met1–Lys32 lie on the Extracellular side of the membrane. Residues Val33–His55 form a helical membrane-spanning segment. Residues Val56–Arg64 are Cytoplasmic-facing. Residues Ala65 to Val87 form a helical membrane-spanning segment. Residues Pro88 to Arg109 lie on the Extracellular side of the membrane. A disulfide bond links Cys108 and Cys194. A helical transmembrane segment spans residues Gly110–Ala131. Over Glu132–Trp154 the chain is Cytoplasmic. The chain crosses the membrane as a helical span at residues Leu155 to Gln176. Over Lys177–Leu217 the chain is Extracellular. Residues Pro218–Cys237 traverse the membrane as a helical segment. The Cytoplasmic segment spans residues Ser238–Gln297. Residues Val298–Leu318 traverse the membrane as a helical segment. The Extracellular portion of the chain corresponds to Met319–His337. Residues Tyr338–Tyr358 form a helical membrane-spanning segment. Residues Asn359–Thr410 lie on the Cytoplasmic side of the membrane. Cys377 carries the S-palmitoyl cysteine lipid modification. Positions His381–Thr410 are disordered.

It belongs to the G-protein coupled receptor 1 family. Neurotensin receptor subfamily. NTSR2 sub-subfamily. Expressed in prostate (at protein level).

Its subcellular location is the cell membrane. In terms of biological role, receptor for the tridecapeptide neurotensin. It is associated with G proteins that activate a phosphatidylinositol-calcium second messenger system. In Homo sapiens (Human), this protein is Neurotensin receptor type 2 (NTSR2).